The sequence spans 455 residues: Probable glycine dehydrogenase (decarboxylating) subunit 1 (455 aa).

This sequence belongs to the GcvP family. N-terminal subunit subfamily. In terms of assembly, the glycine cleavage system is composed of four proteins: P, T, L and H. In this organism, the P 'protein' is a heterodimer of two subunits.

It carries out the reaction N(6)-[(R)-lipoyl]-L-lysyl-[glycine-cleavage complex H protein] + glycine + H(+) = N(6)-[(R)-S(8)-aminomethyldihydrolipoyl]-L-lysyl-[glycine-cleavage complex H protein] + CO2. In terms of biological role, the glycine cleavage system catalyzes the degradation of glycine. The P protein binds the alpha-amino group of glycine through its pyridoxal phosphate cofactor; CO(2) is released and the remaining methylamine moiety is then transferred to the lipoamide cofactor of the H protein. The chain is Probable glycine dehydrogenase (decarboxylating) subunit 1 from Francisella tularensis subsp. holarctica (strain FTNF002-00 / FTA).